The chain runs to 498 residues: Glycerol kinase (498 aa).

T12 serves as a coordination point for ADP. Residues T12, T13, and S14 each coordinate ATP. A sn-glycerol 3-phosphate-binding site is contributed by T12. R16 serves as a coordination point for ADP. Sn-glycerol 3-phosphate contacts are provided by R82, E83, Y134, and D243. 5 residues coordinate glycerol: R82, E83, Y134, D243, and Q244. Residues T265 and G308 each contribute to the ADP site. T265, G308, Q312, and G409 together coordinate ATP. ADP-binding residues include G409 and N413.

It belongs to the FGGY kinase family. In terms of assembly, homotetramer and homodimer (in equilibrium).

The enzyme catalyses glycerol + ATP = sn-glycerol 3-phosphate + ADP + H(+). Its pathway is polyol metabolism; glycerol degradation via glycerol kinase pathway; sn-glycerol 3-phosphate from glycerol: step 1/1. With respect to regulation, activated by phosphorylation and inhibited by fructose 1,6-bisphosphate (FBP). Key enzyme in the regulation of glycerol uptake and metabolism. Catalyzes the phosphorylation of glycerol to yield sn-glycerol 3-phosphate. The protein is Glycerol kinase of Clostridium botulinum (strain Loch Maree / Type A3).